A 290-amino-acid chain; its full sequence is Probable prolyl 4-hydroxylase 8 (290 aa).

At 1-19 (MAKKPKQLRNKPRKSFSTQ) the chain is on the cytoplasmic side. A helical; Signal-anchor for type II membrane protein membrane pass occupies residues 20–40 (TFTVVVLVLFVILILVGLGIF). Topologically, residues 41–290 (SLPSTNKTSS…TKWFHVHEYN (250 aa)) are lumenal. The N-linked (GlcNAc...) asparagine glycan is linked to N46. The Fe2OG dioxygenase domain occupies 163–286 (NGEGLQVLHY…KWSSTKWFHV (124 aa)). H181 and D183 together coordinate Fe cation. N222 is a glycosylation site (N-linked (GlcNAc...) asparagine). H267 lines the Fe cation pocket. Residue K277 coordinates 2-oxoglutarate.

The protein belongs to the P4HA family. Requires Fe(2+) as cofactor. L-ascorbate serves as cofactor.

It localises to the endoplasmic reticulum membrane. It carries out the reaction L-prolyl-[collagen] + 2-oxoglutarate + O2 = trans-4-hydroxy-L-prolyl-[collagen] + succinate + CO2. Functionally, catalyzes the post-translational formation of 4-hydroxyproline in -Xaa-Pro-Gly- sequences in proline-rich peptide sequences of plant glycoproteins and other proteins. Hydroxyprolines are important constituent of many plant cell wall glycoproteins such as extensins, hydroxyproline-rich glycoproteins, lectins and arabinogalactan proteins. In Arabidopsis thaliana (Mouse-ear cress), this protein is Probable prolyl 4-hydroxylase 8.